Reading from the N-terminus, the 404-residue chain is Cysteine desulfurase IscS (404 aa).

Pyridoxal 5'-phosphate-binding positions include 85–86, Asn165, Gln193, 213–215, and Thr251; these read GT and SGH. Cys338 (cysteine persulfide intermediate) is an active-site residue. Cys338 is a [2Fe-2S] cluster binding site.

This sequence belongs to the class-V pyridoxal-phosphate-dependent aminotransferase family. NifS/IscS subfamily. Homodimer. Forms a heterotetramer with IscU, interacts with other sulfur acceptors. It depends on pyridoxal 5'-phosphate as a cofactor.

It is found in the cytoplasm. It carries out the reaction (sulfur carrier)-H + L-cysteine = (sulfur carrier)-SH + L-alanine. The protein operates within cofactor biosynthesis; iron-sulfur cluster biosynthesis. Master enzyme that delivers sulfur to a number of partners involved in Fe-S cluster assembly, tRNA modification or cofactor biosynthesis. Catalyzes the removal of elemental sulfur atoms from cysteine to produce alanine. Functions as a sulfur delivery protein for Fe-S cluster synthesis onto IscU, an Fe-S scaffold assembly protein, as well as other S acceptor proteins. This Methanosarcina thermophila protein is Cysteine desulfurase IscS.